Consider the following 131-residue polypeptide: Insulin-like 3 (131 aa).

The N-terminal stretch at 1 to 24 (MDPRLPAWALVLLGPALVFALGPA) is a signal peptide. 3 cysteine pairs are disulfide-bonded: Cys34-Cys117, Cys46-Cys130, and Cys116-Cys121. Positions 58–104 (PVAAGDGELLQWLERRHLLYGLVANSEPAPGGPGLQPMPQTSHHHRH) are cleaved as a propeptide — c peptide like. Residues 86–105 (APGGPGLQPMPQTSHHHRHR) form a disordered region.

It belongs to the insulin family. As to quaternary structure, heterodimer of a B chain and an A chain linked by two disulfide bonds. In terms of tissue distribution, highest expression in the Leydig cells of the testis.

The protein localises to the secreted. In terms of biological role, seems to play a role in testicular function. May be a trophic hormone with a role in testicular descent in fetal life. Is a ligand for LGR8 receptor. The sequence is that of Insulin-like 3 (INSL3) from Callithrix jacchus (White-tufted-ear marmoset).